The sequence spans 466 residues: Glutamate--tRNA ligase (466 aa).

Residues 10 to 20 (PSPTGYLHIGG) carry the 'HIGH' region motif. Positions 237–241 (RLSKR) match the 'KMSKS' region motif. Residue Lys240 coordinates ATP.

This sequence belongs to the class-I aminoacyl-tRNA synthetase family. Glutamate--tRNA ligase type 1 subfamily. As to quaternary structure, monomer.

It localises to the cytoplasm. It catalyses the reaction tRNA(Glu) + L-glutamate + ATP = L-glutamyl-tRNA(Glu) + AMP + diphosphate. Functionally, catalyzes the attachment of glutamate to tRNA(Glu) in a two-step reaction: glutamate is first activated by ATP to form Glu-AMP and then transferred to the acceptor end of tRNA(Glu). The polypeptide is Glutamate--tRNA ligase (Syntrophotalea carbinolica (strain DSM 2380 / NBRC 103641 / GraBd1) (Pelobacter carbinolicus)).